We begin with the raw amino-acid sequence, 249 residues long: L-fucose operon activator (249 aa).

The 56-residue stretch at 1–56 folds into the HTH deoR-type domain; the sequence is MNYRDELILQWVNQQGKASVIELAQHCDISVETIRRDLNKLANKGLLHRTHGGAVS. The segment at residues 18-37 is a DNA-binding region (H-T-H motif); the sequence is ASVIELAQHCDISVETIRRD.

Transcriptional activator of the fuc operon. This Haemophilus influenzae (strain ATCC 51907 / DSM 11121 / KW20 / Rd) protein is L-fucose operon activator (fucR).